A 397-amino-acid polypeptide reads, in one-letter code: MVVFSQVTVALTCFSAIASAAAVRQEPPQGFTVNQVQKAVPGTRTVNLPGLYANALVKYGATVPATVHAAAVSGSAITTPEADDVEYLTPVTIGSSTLNLDFDTGSADLWVFSSELTSSQQSGHDVYNVGSLGTKLSGASWSISYGDGSSASGDVYKDTVTVGGVKATGQAVEAAKKISSQFLQDKNNDGLLGMAFSSINTVSPTPQKTFFDTVKSSLGEPLFAVTLQGTGRPWHLRFGYIDSDKYTGTLAYADVDDSDGFWSFTADSYKIGTGAAGKSITGIADTGTTLLLLDSSIVTGLLQEGYPGSQNSSSAGGYIFPCSATLPDFTVTINGYDAVVPGKYINFAPVSTGSSSCYGGIQSNSGIGFSIFGDIFLKSQYVVFDSEGPRLGFAAQA.

An N-terminal signal peptide occupies residues 1–20 (MVVFSQVTVALTCFSAIASA). The propeptide at 21–71 (AAVRQEPPQGFTVNQVQKAVPGTRTVNLPGLYANALVKYGATVPATVHAAA) is activation peptide. The region spanning 87 to 394 (YLTPVTIGSS…DSEGPRLGFA (308 aa)) is the Peptidase A1 domain. Catalysis depends on residues aspartate 103 and aspartate 285. Residue asparagine 311 is glycosylated (N-linked (GlcNAc...) asparagine). An intrachain disulfide couples cysteine 322 to cysteine 357.

It belongs to the peptidase A1 family. As to quaternary structure, monomer.

It localises to the secreted. The catalysed reaction is Hydrolysis of proteins with broad specificity similar to that of pepsin A, preferring hydrophobic residues at P1 and P1', but also cleaving 20-Gly-|-Glu-21 in the B chain of insulin. Clots milk, and activates trypsinogen.. Functionally, secreted aspartic endopeptidase that allows assimilation of proteinaceous substrates. The scissile peptide bond is attacked by a nucleophilic water molecule activated by two aspartic residues in the active site. Shows a broad primary substrate specificity. Favors hydrophobic residues at the P1 and P1' positions, but can also activate trypsinogen and hydrolyze the B chain of insulin between positions 'Gly-20' and 'Glu-21'. The polypeptide is Penicillopepsin-1 (Penicillium roqueforti).